The primary structure comprises 487 residues: Cyclic AMP-dependent transcription factor ATF-2 (487 aa).

The C2H2-type zinc finger occupies 7-31 (FLCTAPGCGQRFTNEDHLAVHKHKH). At Thr-34 the chain carries Phosphothreonine; by PKC/PRKCH. Residue Ser-44 is modified to Phosphoserine. The residue at position 51 (Thr-51) is a Phosphothreonine; by MAPK11 and MAPK14. A Phosphothreonine; by MAPK1, MAPK3, MAPK11, MAPK12, MAPK14 and PLK3 modification is found at Thr-53. Thr-55 carries the phosphothreonine; by VRK1 modification. Phosphoserine is present on residues Ser-72 and Ser-94. At Thr-98 the chain carries Phosphothreonine. Ser-103 bears the Phosphoserine; by PKC/PRKCA and PKC/PRKCB mark. Disordered stretches follow at residues 106–137 (EEPS…PLAQ) and 241–355 (PGIP…RQKR). The residue at position 118 (Ser-118) is a Phosphoserine. A compositionally biased stretch (polar residues) spans 264 to 275 (LTQQHPPVTNGD). The tract at residues 278–281 (KGHG) is essential for its histone acetyltransferase activity. The span at 300-316 (PATSTTETPASPAHTTP) shows a compositional bias: low complexity. Phosphoserine is present on Ser-310. Ser-322 carries the phosphoserine; by PKC/PRKCA and PKC/PRKCB modification. Residues 328 to 345 (AANEDPDEKRRKFLERNR) are compositionally biased toward basic and acidic residues. Residues 334 to 397 (DEKRRKFLER…AQLKQLLLAH (64 aa)) enclose the bZIP domain. The interval 336-356 (KRRKFLERNRAAASRCRQKRK) is basic motif. Lys-339 carries the post-translational modification N6-acetyllysine. Ser-349 carries the post-translational modification Phosphoserine; by PKC/PRKCA and PKC/PRKCB. Lys-356 carries the post-translational modification N6-acetyllysine. The interval 362–390 (LEKKAEDLSSLNGQLQSEVTLLRNEVAQL) is leucine-zipper. A Nuclear export signal motif is present at residues 387 to 396 (VAQLKQLLLA). The tract at residues 407 to 453 (KKSGYHTADKDDSSEDLSVPSSPHTEAIQHSSVSTSNGVSSTSKAEA) is disordered. Ser-424 and Ser-428 each carry phosphoserine. Residues 425 to 436 (VPSSPHTEAIQH) are compositionally biased toward polar residues. Positions 437–449 (SSVSTSNGVSSTS) are enriched in low complexity. 2 positions are modified to phosphoserine; by ATM: Ser-472 and Ser-480.

This sequence belongs to the bZIP family. ATF subfamily. In terms of assembly, binds DNA as a dimer and can form a homodimer in the absence of DNA. Can form a heterodimer with JUN. Heterodimerization is essential for its transcriptional activity. Interacts with SMAD3 and SMAD4. Interacts with the HK1/VDAC1 complex. Interacts with NBN, MRE11, XPO1, KAT5 and CUL3. Binds through its N-terminal region to UTF1 which acts as a coactivator of ATF2 transcriptional activity. Post-translationally, phosphorylation of Thr-51 by MAPK14 and MAPK11, and at Thr-53 by MAPK1/ERK2, MAPK3/ERK1, MAPK11, MAPK12 and MAPK14 in response to external stimulus like insulin causes increased transcriptional activity. Phosphorylated by PLK3 following hyperosmotic stress. Also phosphorylated and activated by JNK and CaMK4. ATM-mediated phosphorylation at Ser-472 and Ser-480 stimulates its function in DNA damage response. Phosphorylation at Ser-44, Thr-55 and Ser-103 activates its transcriptional activity. Phosphorylation at Thr-51 or Thr-53 enhances acetylation of histones H2B and H4.

The protein localises to the nucleus. It localises to the cytoplasm. The protein resides in the mitochondrion outer membrane. Its function is as follows. Transcriptional activator which regulates the transcription of various genes, including those involved in anti-apoptosis, cell growth, and DNA damage response. Dependent on its binding partner, binds to CRE (cAMP response element) consensus sequences (5'-TGACGTCA-3') or to AP-1 (activator protein 1) consensus sequences (5'-TGACTCA-3'). In the nucleus, contributes to global transcription and the DNA damage response, in addition to specific transcriptional activities that are related to cell development, proliferation and death. In the cytoplasm, interacts with and perturbs HK1- and VDAC1-containing complexes at the mitochondrial outer membrane, thereby impairing mitochondrial membrane potential, inducing mitochondrial leakage and promoting cell death. The phosphorylated form (mediated by ATM) plays a role in the DNA damage response and is involved in the ionizing radiation (IR)-induced S phase checkpoint control and in the recruitment of the MRN complex into the IR-induced foci (IRIF). Exhibits histone acetyltransferase (HAT) activity which specifically acetylates histones H2B and H4 in vitro. In concert with CUL3 and RBX1, promotes the degradation of KAT5 thereby attenuating its ability to acetylate and activate ATM. Can elicit oncogenic or tumor suppressor activities depending on the tissue or cell type. In Mus musculus (Mouse), this protein is Cyclic AMP-dependent transcription factor ATF-2 (Atf2).